A 130-amino-acid chain; its full sequence is Small ribosomal subunit protein uS8 (130 aa).

The protein belongs to the universal ribosomal protein uS8 family. Part of the 30S ribosomal subunit.

Its function is as follows. One of the primary rRNA binding proteins, it binds directly to 16S rRNA central domain where it helps coordinate assembly of the platform of the 30S subunit. The sequence is that of Small ribosomal subunit protein uS8 from Thermococcus gammatolerans (strain DSM 15229 / JCM 11827 / EJ3).